The primary structure comprises 201 residues: Glycerol-3-phosphate acyltransferase (201 aa).

Helical transmembrane passes span 4–24 (IASL…LVSL), 84–104 (EIAM…FLAF), 116–136 (VLLA…LAVA), and 157–177 (AWFI…LLLV).

It belongs to the PlsY family. Probably interacts with PlsX.

The protein resides in the cell inner membrane. The catalysed reaction is an acyl phosphate + sn-glycerol 3-phosphate = a 1-acyl-sn-glycero-3-phosphate + phosphate. It participates in lipid metabolism; phospholipid metabolism. Its function is as follows. Catalyzes the transfer of an acyl group from acyl-phosphate (acyl-PO(4)) to glycerol-3-phosphate (G3P) to form lysophosphatidic acid (LPA). This enzyme utilizes acyl-phosphate as fatty acyl donor, but not acyl-CoA or acyl-ACP. This is Glycerol-3-phosphate acyltransferase from Laribacter hongkongensis (strain HLHK9).